We begin with the raw amino-acid sequence, 150 residues long: Small ribosomal subunit protein eS19 (150 aa).

The protein belongs to the eukaryotic ribosomal protein eS19 family. In terms of assembly, part of the 30S ribosomal subunit.

May be involved in maturation of the 30S ribosomal subunit. The sequence is that of Small ribosomal subunit protein eS19 from Thermoplasma acidophilum (strain ATCC 25905 / DSM 1728 / JCM 9062 / NBRC 15155 / AMRC-C165).